Consider the following 202-residue polypeptide: IPVTKLGRLVKDMKIKSLEEIYLFSLPIKESEIIDFFLGASLKDEVLKIMPVQKQTRAGQRTRFKAFVAIGDYNGHVGLGVKCSKEVATAIRGAIILAKLSIVPVRRGYWGNKIGKPHTVPCKVTGRCGSVLVRLIPAPRGTGIVSAPVPKKLLMMAGIDDCYTSARGCTATLGNFAKATFDAISKTYSYLTPDLWKETVFT.

One can recognise an S5 DRBM domain in the interval 42-105 (LKDEVLKIMP…ILAKLSIVPV (64 aa)). Residue Thr-192 is modified to Phosphothreonine.

It belongs to the universal ribosomal protein uS5 family. As to quaternary structure, component of the small ribosomal subunit. Interacts with zinc finger protein ZNF277 (via zinc-finger domains); the interaction is direct; the interaction is extra-ribosomal. Interaction with ZNF277 competes with the binding of RPS2 to protein arginine methyltransferase PRMT3. In terms of processing, citrullinated by PADI4 in the Arg/Gly-rich region. Asymmetric arginine dimethylation by PRMT3 occurs at multiple sites in the Arg/Gly-rich region. Post-translationally, monoubiquitinated by RNF10 when a ribosome has stalled during translation, leading to its degradation by the proteasome. Deubiquitinated by USP10, preventing degradation by the proteasome and promoting 40S ribosome subunit recycling following ribosome dissociation.

The protein localises to the cytoplasm. Its subcellular location is the nucleus. The protein resides in the nucleolus. Functionally, component of the ribosome, a large ribonucleoprotein complex responsible for the synthesis of proteins in the cell. The small ribosomal subunit (SSU) binds messenger RNAs (mRNAs) and translates the encoded message by selecting cognate aminoacyl-transfer RNA (tRNA) molecules. The large subunit (LSU) contains the ribosomal catalytic site termed the peptidyl transferase center (PTC), which catalyzes the formation of peptide bonds, thereby polymerizing the amino acids delivered by tRNAs into a polypeptide chain. The nascent polypeptides leave the ribosome through a tunnel in the LSU and interact with protein factors that function in enzymatic processing, targeting, and the membrane insertion of nascent chains at the exit of the ribosomal tunnel. Plays a role in the assembly and function of the 40S ribosomal subunit. Mutations in this protein affects the control of translational fidelity. Involved in nucleolar processing of pre-18S ribosomal RNA and ribosome assembly. This chain is Small ribosomal subunit protein uS5 (RPS2), found in Cricetulus griseus (Chinese hamster).